We begin with the raw amino-acid sequence, 132 residues long: Ribonuclease P protein component (132 aa).

Belongs to the RnpA family. In terms of assembly, consists of a catalytic RNA component (M1 or rnpB) and a protein subunit.

The enzyme catalyses Endonucleolytic cleavage of RNA, removing 5'-extranucleotides from tRNA precursor.. Functionally, RNaseP catalyzes the removal of the 5'-leader sequence from pre-tRNA to produce the mature 5'-terminus. It can also cleave other RNA substrates such as 4.5S RNA. The protein component plays an auxiliary but essential role in vivo by binding to the 5'-leader sequence and broadening the substrate specificity of the ribozyme. In Marinobacter nauticus (strain ATCC 700491 / DSM 11845 / VT8) (Marinobacter aquaeolei), this protein is Ribonuclease P protein component.